The primary structure comprises 338 residues: Lipoate-protein ligase A (338 aa).

Positions aspartate 29–valine 216 constitute a BPL/LPL catalytic domain. ATP contacts are provided by residues arginine 71, glycine 76–phenylalanine 79, and lysine 134. Residue lysine 134 participates in (R)-lipoate binding.

It belongs to the LplA family. Monomer.

It localises to the cytoplasm. The catalysed reaction is L-lysyl-[lipoyl-carrier protein] + (R)-lipoate + ATP = N(6)-[(R)-lipoyl]-L-lysyl-[lipoyl-carrier protein] + AMP + diphosphate + H(+). Its pathway is protein modification; protein lipoylation via exogenous pathway; protein N(6)-(lipoyl)lysine from lipoate: step 1/2. It participates in protein modification; protein lipoylation via exogenous pathway; protein N(6)-(lipoyl)lysine from lipoate: step 2/2. Functionally, catalyzes both the ATP-dependent activation of exogenously supplied lipoate to lipoyl-AMP and the transfer of the activated lipoyl onto the lipoyl domains of lipoate-dependent enzymes. This chain is Lipoate-protein ligase A, found in Aeromonas salmonicida (strain A449).